A 207-amino-acid polypeptide reads, in one-letter code: Large ribosomal subunit protein uL4 (207 aa).

It belongs to the universal ribosomal protein uL4 family. In terms of assembly, part of the 50S ribosomal subunit.

One of the primary rRNA binding proteins, this protein initially binds near the 5'-end of the 23S rRNA. It is important during the early stages of 50S assembly. It makes multiple contacts with different domains of the 23S rRNA in the assembled 50S subunit and ribosome. Its function is as follows. Forms part of the polypeptide exit tunnel. The protein is Large ribosomal subunit protein uL4 of Geobacter sulfurreducens (strain ATCC 51573 / DSM 12127 / PCA).